Reading from the N-terminus, the 260-residue chain is Flap endonuclease Xni (260 aa).

Aspartate 109 is a Mg(2+) binding site. Positions 165–259 (VKPSQLADYW…DIRFTGPNKA (95 aa)) constitute a 5'-3' exonuclease domain. K(+) contacts are provided by leucine 176, proline 185, valine 187, and valine 190. The segment at 189-194 (GVGPKA) is interaction with DNA.

The protein belongs to the Xni family. Mg(2+) serves as cofactor. Requires K(+) as cofactor.

Has flap endonuclease activity. During DNA replication, flap endonucleases cleave the 5'-overhanging flap structure that is generated by displacement synthesis when DNA polymerase encounters the 5'-end of a downstream Okazaki fragment. The polypeptide is Flap endonuclease Xni (Vibrio campbellii (strain ATCC BAA-1116)).